The following is a 1232-amino-acid chain: Nitrate reductase alpha subunit (1232 aa).

The region spanning 53-117 (DKVVRSTHGV…SFSWYSYSPT (65 aa)) is the 4Fe-4S Mo/W bis-MGD-type domain. [4Fe-4S] cluster contacts are provided by histidine 60, cysteine 64, cysteine 68, and cysteine 103. Position 233 (aspartate 233) interacts with Mo-bis(molybdopterin guanine dinucleotide).

Belongs to the prokaryotic molybdopterin-containing oxidoreductase family. [4Fe-4S] cluster serves as cofactor. The cofactor is Mo-bis(molybdopterin guanine dinucleotide).

It is found in the cell membrane. The enzyme catalyses nitrate + a quinol = a quinone + nitrite + H2O. In terms of biological role, the alpha chain is the actual site of nitrate reduction. The polypeptide is Nitrate reductase alpha subunit (narG) (Mycobacterium tuberculosis (strain CDC 1551 / Oshkosh)).